The chain runs to 474 residues: Nitrogenase vanadium-iron protein alpha chain (474 aa).

Cys-49, Cys-75, and Cys-138 together coordinate [8Fe-7S] cluster. Cys-257 and His-423 together coordinate [7Fe-V-9S-C-homocitryl] cluster.

Belongs to the NifD/NifK/NifE/NifN family. Hexamer of two alpha, two beta, and two delta chains. [8Fe-7S] cluster is required as a cofactor. [7Fe-V-9S-C-homocitryl] cluster serves as cofactor.

The enzyme catalyses N2 + 8 reduced [2Fe-2S]-[ferredoxin] + 16 ATP + 16 H2O = H2 + 8 oxidized [2Fe-2S]-[ferredoxin] + 2 NH4(+) + 16 ADP + 16 phosphate + 6 H(+). This vanadium-iron protein is part of the nitrogenase complex that catalyzes the key enzymatic reactions in nitrogen fixation. In Azotobacter vinelandii, this protein is Nitrogenase vanadium-iron protein alpha chain (vnfD).